The following is a 179-amino-acid chain: Large ribosomal subunit protein uL5 (179 aa).

The protein belongs to the universal ribosomal protein uL5 family. As to quaternary structure, part of the 50S ribosomal subunit; part of the 5S rRNA/L5/L18/L25 subcomplex. Contacts the 5S rRNA and the P site tRNA. Forms a bridge to the 30S subunit in the 70S ribosome.

Functionally, this is one of the proteins that bind and probably mediate the attachment of the 5S RNA into the large ribosomal subunit, where it forms part of the central protuberance. In the 70S ribosome it contacts protein S13 of the 30S subunit (bridge B1b), connecting the 2 subunits; this bridge is implicated in subunit movement. Contacts the P site tRNA; the 5S rRNA and some of its associated proteins might help stabilize positioning of ribosome-bound tRNAs. This is Large ribosomal subunit protein uL5 from Francisella philomiragia subsp. philomiragia (strain ATCC 25017 / CCUG 19701 / FSC 153 / O#319-036).